Reading from the N-terminus, the 157-residue chain is Cytochrome c-type biogenesis protein CcmE (157 aa).

Over M1–R8 the chain is Cytoplasmic. The helical; Signal-anchor for type II membrane protein transmembrane segment at L9–A29 threads the bilayer. The Periplasmic segment spans residues L30–S157. Residues H124 and Y128 each contribute to the heme site.

The protein belongs to the CcmE/CycJ family.

The protein resides in the cell inner membrane. Its function is as follows. Heme chaperone required for the biogenesis of c-type cytochromes. Transiently binds heme delivered by CcmC and transfers the heme to apo-cytochromes in a process facilitated by CcmF and CcmH. The polypeptide is Cytochrome c-type biogenesis protein CcmE (Saccharophagus degradans (strain 2-40 / ATCC 43961 / DSM 17024)).